The following is an 876-amino-acid chain: Probable inactive ATP-dependent zinc metalloprotease FTSHI 2, chloroplastic (876 aa).

The interval 1–20 (MACRFPLHSSSPSQFLSPEN) is disordered. A chloroplast-targeting transit peptide spans 1 to 32 (MACRFPLHSSSPSQFLSPENRQRLPRNYPSIS). Over residues 8–19 (HSSSPSQFLSPE) the composition is skewed to polar residues. The helical transmembrane segment at 59–79 (LLAIPITLTIISASLAKPSFA) threads the bilayer. Residues 256–276 (TMKAQKKQQERKKRKAVRKKK) are disordered. Basic residues predominate over residues 258 to 275 (KAQKKQQERKKRKAVRKK). The helical transmembrane segment at 304-324 (VATALGLVFFYIFYRVVVLNY) threads the bilayer. Residues 350–370 (ELEREMEGIEEEDEEVEEGTG) are disordered. A compositionally biased stretch (acidic residues) spans 357 to 368 (GIEEEDEEVEEG). 450-457 (GPPGVGKT) lines the ATP pocket.

In the N-terminal section; belongs to the AAA ATPase family. This sequence in the C-terminal section; belongs to the peptidase M41 family. Homooligomer. Interacts with FtsHi4.

The protein resides in the plastid. It is found in the chloroplast membrane. Functionally, required for plastid development during embryogenesis. Might be involved in chaperone functions or play a structural role in the thylakoid FtsH complex. The protein is Probable inactive ATP-dependent zinc metalloprotease FTSHI 2, chloroplastic of Arabidopsis thaliana (Mouse-ear cress).